A 152-amino-acid chain; its full sequence is Nucleoside diphosphate kinase (152 aa).

The ATP site is built by Lys-11, Phe-59, Arg-87, Thr-93, Arg-104, and Asn-114. His-117 (pros-phosphohistidine intermediate) is an active-site residue.

The protein belongs to the NDK family. As to quaternary structure, homotetramer. Mg(2+) serves as cofactor.

The protein localises to the cytoplasm. The enzyme catalyses a 2'-deoxyribonucleoside 5'-diphosphate + ATP = a 2'-deoxyribonucleoside 5'-triphosphate + ADP. It catalyses the reaction a ribonucleoside 5'-diphosphate + ATP = a ribonucleoside 5'-triphosphate + ADP. Its function is as follows. Major role in the synthesis of nucleoside triphosphates other than ATP. The ATP gamma phosphate is transferred to the NDP beta phosphate via a ping-pong mechanism, using a phosphorylated active-site intermediate. The protein is Nucleoside diphosphate kinase of Prochlorococcus marinus (strain MIT 9312).